Consider the following 487-residue polypeptide: MRFYDTASAEVRDFVPLIPGKVSLYYCGATVQGLPHVGHIRSAIAFDQLTRWLEYRGFRVTVVRNVTDIDDKILAKSALSFEPDFEEGPDDVREEEWWALAYRYEQAFLKAYDTLGVSRPTYEPRATGHIPEMHALIQGLIDRGHAYPALDDSGDVYFDVRSWNRYGSLTRQKIDDMQGAPDADPRGKKDPRDFALWKGHKEGEPTTASWVSPWGTGRPGWHLECSAMVTKYLGTEFDIHGGGLDLRFPHHENEMAQSQAAGHAFANFWMHNGMVTYQGEKMSKSIGNTVSPAEMLELASPRVVRYYLGQAQYRSVLDYQPTSLQEAAAAVERIDGFIARAVRTLSGSVVSGAAELLFSSHGTVPDAFAAAMDDDLNVPQALAALHDTVRAGNTALTAGDNSAARTALHSVTDMLRVLGLNDVAAPARDEQADTALGVLVEAQLGARAQARATKDWAASDAIRDTLAAAGVVVEDGPDGASWSLKRG.

Cys27 serves as a coordination point for Zn(2+). Residues 29–39 (ATVQGLPHVGH) carry the 'HIGH' region motif. The segment at 174–194 (IDDMQGAPDADPRGKKDPRDF) is disordered. Basic and acidic residues predominate over residues 183–194 (ADPRGKKDPRDF). Positions 225, 250, and 254 each coordinate Zn(2+). The 'KMSKS' region motif lies at 281–285 (KMSKS). Lys284 serves as a coordination point for ATP.

Belongs to the class-I aminoacyl-tRNA synthetase family. Monomer. The cofactor is Zn(2+).

The protein resides in the cytoplasm. The enzyme catalyses tRNA(Cys) + L-cysteine + ATP = L-cysteinyl-tRNA(Cys) + AMP + diphosphate. This Arthrobacter sp. (strain FB24) protein is Cysteine--tRNA ligase.